We begin with the raw amino-acid sequence, 512 residues long: PTS system mannitol-specific EIICB component (512 aa).

The Cytoplasmic portion of the chain corresponds to 1–28 (MSQTEEKKGIGRRVQAFGSFLSSMIMPN). In terms of domain architecture, PTS EIIC type-2 spans 17-349 (FGSFLSSMIM…MKFTREPKQD (333 aa)). The chain crosses the membrane as a helical span at residues 29–50 (IGAFIAWGFIAAIFIDNGWLPN). The Extracellular segment spans residues 51–54 (KDLA). Residues 55–75 (TLAGPMITYLIPLLIAFSGGR) form a helical membrane-spanning segment. Topologically, residues 76–139 (LIYDLRGGII…QGFEMLFNNF (64 aa)) are cytoplasmic. The chain crosses the membrane as a helical span at residues 140-161 (SAGILGFIMTIAGFKILAPLMK). Residues 162 to 170 (FIMHILSVA) are Extracellular-facing. The helical transmembrane segment at 171 to 191 (VEALVHAHLLPLVSILVEPAK) threads the bilayer. Topologically, residues 192–278 (IVFLNNAINH…VLMRPLLFIA (87 aa)) are cytoplasmic. Residues 279–298 (VILGGMTGVATYQATGFGFK) traverse the membrane as a helical segment. Over 299-318 (SPASPGSFIVYCLNAPRGEF) the chain is Extracellular. A helical transmembrane segment spans residues 319–340 (LHMLLGVFLAALVSFVVAALIM). Residues 341 to 512 (KFTREPKQDL…LNNLKKDDQA (172 aa)) lie on the Cytoplasmic side of the membrane. The disordered stretch occupies residues 355 to 402 (AQMENTKGKKSSVASKLVSSDKNVNTEENASGNVSETSSSDDDPEALL). Low complexity predominate over residues 365-376 (SSVASKLVSSDK). The segment covering 380–392 (TEENASGNVSETS) has biased composition (polar residues). Residues 419 to 512 (NHVIFACDAG…LNNLKKDDQA (94 aa)) enclose the PTS EIIB type-2 domain. Residue cysteine 425 is the Phosphocysteine intermediate; for EIIB activity of the active site. Residue cysteine 425 is modified to Phosphocysteine; by EIIA.

As to quaternary structure, homodimer.

The protein resides in the cell membrane. The enzyme catalyses D-mannitol(out) + N(pros)-phospho-L-histidyl-[protein] = D-mannitol 1-phosphate(in) + L-histidyl-[protein]. In terms of biological role, the phosphoenolpyruvate-dependent sugar phosphotransferase system (sugar PTS), a major carbohydrate active transport system, catalyzes the phosphorylation of incoming sugar substrates concomitantly with their translocation across the cell membrane. The enzyme II CmtAB PTS system is involved in D-mannitol transport. The polypeptide is PTS system mannitol-specific EIICB component (mtlA) (Staphylococcus aureus (strain COL)).